The following is a 130-amino-acid chain: Small ribosomal subunit protein uS9 (130 aa).

This sequence belongs to the universal ribosomal protein uS9 family.

The polypeptide is Small ribosomal subunit protein uS9 (Nitrosomonas eutropha (strain DSM 101675 / C91 / Nm57)).